We begin with the raw amino-acid sequence, 83 residues long: UPF0297 protein LEUM_0557 (83 aa).

This sequence belongs to the UPF0297 family.

The chain is UPF0297 protein LEUM_0557 from Leuconostoc mesenteroides subsp. mesenteroides (strain ATCC 8293 / DSM 20343 / BCRC 11652 / CCM 1803 / JCM 6124 / NCDO 523 / NBRC 100496 / NCIMB 8023 / NCTC 12954 / NRRL B-1118 / 37Y).